A 63-amino-acid polypeptide reads, in one-letter code: Mu-like prophage FluMu protein gp38 (63 aa).

It to phage Mu protein gp38.

In Haemophilus influenzae (strain ATCC 51907 / DSM 11121 / KW20 / Rd), this protein is Mu-like prophage FluMu protein gp38.